The primary structure comprises 39 residues: Protein YkiC (39 aa).

Residues 13–35 (LLSAKLCNCTQAIMTHIIASFLA) traverse the membrane as a helical segment.

Its subcellular location is the cell inner membrane. This Escherichia coli (strain K12) protein is Protein YkiC.